We begin with the raw amino-acid sequence, 882 residues long: Protein PML (882 aa).

Positions 1–48 (MEPAPARSPRPQQDPARPQEPTMPPPETPSEGRQPSPSPSPTERAPAS) are disordered. Ser-8 is subject to Phosphoserine; by HIPK2. Ser-36 and Ser-38 each carry phosphoserine; by HIPK2 and MAPK1. At Ser-48 the chain carries Phosphoserine. The Zn(2+) site is built by Cys-57 and Cys-60. An RING-type zinc finger spans residues 57–92 (CQQCQAEAKCPKLLPCLHTLCSGCLEASGMQCPICQ). A Glycyl lysine isopeptide (Lys-Gly) (interchain with G-Cter in SUMO1); alternate cross-link involves residue Lys-65. Lys-65 is covalently cross-linked (Glycyl lysine isopeptide (Lys-Gly) (interchain with G-Cter in SUMO2); alternate). Positions 72, 74, 77, 80, 88, and 91 each coordinate Zn(2+). Ser-117 carries the post-translational modification Phosphoserine; by CHEK2. The B box-type 1; atypical zinc-finger motif lies at 124–166 (DAQAVCTRCKESADFWCFECEQLLCAKCFEAHQWFLKHEARPL). Residues Cys-129, Cys-132, Cys-151, and His-155 each coordinate Zn(2+). Residue Lys-160 forms a Glycyl lysine isopeptide (Lys-Gly) (interchain with G-Cter in SUMO1); alternate linkage. Lys-160 participates in a covalent cross-link: Glycyl lysine isopeptide (Lys-Gly) (interchain with G-Cter in SUMO2); alternate. A Glycyl lysine isopeptide (Lys-Gly) (interchain with G-Cter in SUMO1P1/SUMO5); alternate cross-link involves residue Lys-160. A B box-type 2 zinc finger spans residues 183–236 (KTNNIFCSNPNHRTPTLTSIYCRGCSKPLCCSCALLDSSHSELKCDISAEIQQR). Zn(2+) contacts are provided by Cys-189, His-194, Cys-215, and His-222. Residues 228–253 (DISAEIQQRQEELDAMTQALQEQDSA) are a coiled coil. Lys-380 is covalently cross-linked (Glycyl lysine isopeptide (Lys-Gly) (interchain with G-Cter in SUMO2); alternate). Residue Lys-380 forms a Glycyl lysine isopeptide (Lys-Gly) (interchain with G-Cter in /SUMO5); alternate linkage. Residue Lys-380 forms a Glycyl lysine isopeptide (Lys-Gly) (interchain with G-Cter in ubiquitin); alternate linkage. Lys-394 is covalently cross-linked (Glycyl lysine isopeptide (Lys-Gly) (interchain with G-Cter in SUMO2)). Lys-400 participates in a covalent cross-link: Glycyl lysine isopeptide (Lys-Gly) (interchain with G-Cter in SUMO1P1/SUMO5); alternate. Glycyl lysine isopeptide (Lys-Gly) (interchain with G-Cter in ubiquitin); alternate cross-links involve residues Lys-400 and Lys-401. A Glycyl lysine isopeptide (Lys-Gly) (interchain with G-Cter in SUMO2); alternate cross-link involves residue Lys-401. Position 403 is a phosphoserine; by MAPK1 and MAPK7 (Ser-403). Residues 448–555 (GAHPVPVYAF…ASGAGEAEER (108 aa)) are interaction with PER2. Lys-460 is covalently cross-linked (Glycyl lysine isopeptide (Lys-Gly) (interchain with G-Cter in SUMO2)). The tract at residues 467 to 589 (DVSNTTTAQK…SESSDLQLEG (123 aa)) is disordered. A compositionally biased stretch (polar residues) spans 468 to 484 (VSNTTTAQKRKCSQTQC). Residue Lys-476 forms a Glycyl lysine isopeptide (Lys-Gly) (interchain with G-Cter in SUMO2); alternate linkage. Residue Lys-476 forms a Glycyl lysine isopeptide (Lys-Gly) (interchain with G-Cter in ubiquitin); alternate linkage. A Nuclear localization signal motif is present at residues 476–490 (KRKCSQTQCPRKVIK). Lys-478 participates in a covalent cross-link: Glycyl lysine isopeptide (Lys-Gly) (interchain with G-Cter in SUMO2). Residues Lys-487 and Lys-490 each participate in a glycyl lysine isopeptide (Lys-Gly) (interchain with G-Cter in SUMO2); alternate cross-link. Lys-487 bears the N6-acetyllysine; alternate mark. Residues 489–501 (IKMESEEGKEARL) are compositionally biased toward basic and acidic residues. A Glycyl lysine isopeptide (Lys-Gly) (interchain with G-Cter in SUMO1); alternate cross-link involves residue Lys-490. A Glycyl lysine isopeptide (Lys-Gly) (interchain with G-Cter in SUMO1P1/SUMO5); alternate cross-link involves residue Lys-490. Ser-493 is modified (phosphoserine). A Glycyl lysine isopeptide (Lys-Gly) (interchain with G-Cter in SUMO1); alternate cross-link involves residue Lys-497. Lys-497 participates in a covalent cross-link: Glycyl lysine isopeptide (Lys-Gly) (interchain with G-Cter in SUMO2); alternate. Lys-497 is covalently cross-linked (Glycyl lysine isopeptide (Lys-Gly) (interchain with G-Cter in SUMO1P1/SUMO5); alternate). Position 504 is a phosphoserine (Ser-504). Ser-505 bears the Phosphoserine; by MAPK1 mark. The span at 505-516 (SPEQPRPSTSKA) shows a compositional bias: polar residues. Residue Ser-512 is modified to Phosphoserine. Lys-515 carries the post-translational modification N6-acetyllysine. Phosphoserine is present on residues Ser-518, Ser-527, and Ser-530. Ser-518 bears the Phosphoserine; by CDK1 and CDK2 mark. Phosphoserine; by MAPK1 is present on residues Ser-527 and Ser-530. The interval 556–562 (VVVISSS) is sumo interaction motif (SIM). The residue at position 565 (Ser-565) is a Phosphoserine. Ser-565 is subject to Phosphoserine; by CK2. Phosphothreonine is present on Thr-867.

In terms of assembly, key component of PML bodies. PML bodies are formed by the interaction of PML homodimers (via SUMO-binding motif) with sumoylated PML, leading to the assembly of higher oligomers. Several types of PML bodies have been observed. PML bodies can form hollow spheres that can sequester target proteins inside. Interacts (via SUMO-binding motif) with sumoylated proteins. Interacts (via C-terminus) with p53/TP53. Recruits p53/TP53 and CHEK2 into PML bodies, which promotes p53/TP53 phosphorylation at 'Ser-20' and prevents its proteasomal degradation. Interacts with MDM2, and sequesters MDM2 in the nucleolus, thereby preventing ubiquitination of p53/TP53. Interaction with PML-RARA oncoprotein and certain viral proteins causes disassembly of PML bodies and abolishes the normal PML function. Interacts with HIPK2, TERT, SIRT1, TOPBP1, TRIM27 and TRIM69. Interacts with ELF4 (via C-terminus). Interacts with ITPR3. Interacts (in the cytoplasm) with TGFBR1, TGFBR2 and PKM. Interacts (via the coiled-coil domain and when sumoylated) with SATB1. Interacts with UBE2I; the interaction is enhanced by arsenic binding. Interacts (PML-RARA oncoprotein, via the coiled-coil domain) with UBE2I; the interaction is enhanced by arsenic binding and is required for PML-RARA oncoprotein sumoylation and inhibition of RARA transactivational activity. Interacts with RB1, PPP1A, SMAD2, SMAD3, DAXX, RPL11 and MTOR. Interacts with PPARGC1A and KAT2A. Interacts with CSNK2A1 and CSNK2A3. Interacts with ANKRD2; the interaction is direct. Interacts (via SUMO-interacting motif) with sumoylated MORC3. Isoform PML-1, isoform PML-2, isoform PML-3, isoform PML-4, isoform PML-5 and isoform PML-6 interact with RNF4. Isoform PML-1 interacts with NLRP3. Isoform PML-1, isoform PML-2, isoform PML-3, isoform PML-4 and isoform PML-5 interact with MAGEA2, RBL2, PER2 and E2F4. Isoform PML-2 interacts with CIITA. Isoform PML-2, isoform PML-3 and isoform PML-4 interact with TBX2. Isoform PML-4 interacts with RANBP2, HDAC7, KAT6A, WRN, PIN1, TBX3 and phosphorylated MAPK1/ERK2. Isoform PML-4 interacts with the CTNNB1 and TCF7L2/TCF4 complex. Isoform PML-4 preferentially interacts with MAPK7/BMK1 although other isoforms (isoform PML-1, isoform PML-2, isoform PML-3 and isoform PML-6) also interact with it. Isoform PML-12 interacts with PIAS1, PIAS2 (isoform PIAS2-alpha) and CSNK2A1/CK2. Interacts with TRIM16. Interacts with PRDM1/Blimp-1. Interacts (via RING-type zinc finger) with EIF4E; the interaction results in conformational changes of both interacting proteins and reduces EIF4E affinity for the 5' m7G cap of mRNA, thus reducing EIF4E-mediated mRNA nuclear export. As to quaternary structure, (Microbial infection) Interacts with Lassa virus Z protein and rabies virus phosphoprotein. (Microbial infection) Isoform PML-1 interacts with herpes simplex virus-1/HHV-1 ICP0. In terms of assembly, (Microbial infection) Isoform PML-2 interacts with human adenovirus 2 E1A and this interaction stimulates E1A-dependent transcriptional activation. As to quaternary structure, (Microbial infection) Isoform PML-4 interacts with VZV capsid protein VP26/ORF23 capsid protein. (Microbial infection) The sumoylated isoform PML-4 interacts with encephalomyocarditis virus (EMCV) RNA-directed RNA polymerase 3D-POL (P3D-POL). In terms of assembly, (Microbial infection) Isoform PML-6 interacts with moloney murine leukemia virus (MoMLV) integrase (IN) and reverse transcriptase (RT). As to quaternary structure, (Microbial infection) Isoform PML-4 and isoform PML-5 interact with human adenovirus 5 E1B-55K protein; these interactions promote efficient subnuclear targeting of E1B-55K to PML nuclear bodies. (Microbial infection) Isoform PML-3 interacts (via RING-type zinc finger) with human foamy virus bel1/tas and bet. In terms of assembly, (Microbial infection) Interacts with human cytomegalovirus (HHV-5) immediate early protein IE1; this interaction mediates PML desumoylation and PML-mediated sumoylation of IE1. Post-translationally, ubiquitinated; mediated by RNF4, RNF111, UHRF1, UBE3A/E6AP, BCR(KLHL20) E3 ubiquitin ligase complex E3 ligase complex, SIAH1 or SIAH2 and leading to subsequent proteasomal degradation. Ubiquitination by BCR(KLHL20) E3 ubiquitin ligase complex E3 ligase complex requires CDK1/2-mediated phosphorylation at Ser-518 which in turn is recognized by prolyl-isopeptidase PIN1 and PIN1-catalyzed isomerization further potentiates PML interaction with KLHL20. 'Lys-6'-, 'Lys-11'-, 'Lys-48'- and 'Lys-63'-linked polyubiquitination by RNF4 is polysumoylation-dependent. Ubiquitination by RNF111 is polysumoylation-dependent. Sumoylation regulates PML's: stability in response to extracellular or intracellular stimuli, transcription directly and indirectly, through sequestration of or dissociation of the transcription factors from PML-NBs, ability to regulate apoptosis and its anti-viral activities. It is also essential for: maintaining proper PML nuclear bodies (PML-NBs) structure and normal function, recruitment of components of PML-NBs, the turnover and retention of PML in PML-NBs and the integrity of PML-NBs. Undergoes 'Lys-11'-linked sumoylation. Sumoylation on all three sites (Lys-65, Lys-160 and Lys-490) is required for nuclear body formation. Sumoylation on Lys-160 is a prerequisite for sumoylation on Lys-65. Lys-65 and Lys-160 are sumoylated by PISA1 and PIAS2. PIAS1-mediated sumoylation of PML promotes its interaction with CSNK2A1/CK2 and phosphorylation at Ser-565 which in turn triggers its ubiquitin-mediated degradation. PIAS1-mediated sumoylation of PML-RARA promotes its ubiquitin-mediated degradation. The PML-RARA fusion protein requires the coiled-coil domain for sumoylation. Sumoylation at Lys-490 by RANBP2 is essential for the proper assembly of PML-NBs. SUMO1P1/SUMO5 conjugated PML at Lys-160, Lys-380, Lys-400, Lys-490 and Lys-497, but Lys-380, Lys-400 and Lys-497 are not key acceptor lysines. SUMO1P1/SUMO5 forms polymeric chain on Lys-160 of PML by successive conjugation at 'Lys-18'; facilitating recruitment of PML-NB components, which enlarges PML. SUMO1P1/SUMO5 conjugation of PML increases SUMO2/3 conjugation, which leads to the recruitment of RNF4 and ubiquitin-dependent disintegration of PML-NBs. SUMO1P1/SUMO5 monoconjugated Lys-490. DNA damage triggers its sumoylation while some but not all viral infections can abolish sumoylation. Desumoylated by SENP1, SENP2, SENP3, SENP5 and SENP6. Arsenic induces PML and PML-RARA polysumoylation and their subsequent RNF4-dependent ubiquitination and proteasomal degradation, and is used as treatment in acute promyelocytic leukemia (APL). The nuclear isoforms (isoform PML-1, isoform PML-2, isoform PML-3, isoform PML-4, isoform PML-5 and isoform PML-6) show an increased sumoylation in response to arsenic trioxide. The cytoplasmic isoform PML-7 is not sumoylated. In terms of processing, phosphorylation is a major regulatory mechanism that controls PML protein abundance and the number and size of PML nuclear bodies (PML-NBs). Phosphorylated in response to DNA damage, probably by ATR. HIPK2-mediated phosphorylation at Ser-8, Ser-36 and Ser-38 leads to increased accumulation of PML protein and its sumoylation and is required for the maximal pro-apoptotic activity of PML after DNA damage. CHEK2-mediated phosphorylation at Ser-117 is important for PML-mediated apoptosis following DNA damage. MAPK1-mediated phosphorylations at Ser-403, Ser-505, Ser-527 and Ser-530 and CDK1/2-mediated phosphorylation at Ser-518 promote PIN1-dependent PML degradation. CK2-mediated phosphorylation at Ser-565 primes PML ubiquitination via an unidentified ubiquitin ligase. Post-translationally, (Microbial infection) Upon infection with Epstein-Barr virus, phosphorylated by CK2. Viral EBNA1 increases the association of CK2 with PML proteins, which increases PML phosphorylation by CK2, triggering the USP7-dependent polyubiquitylation and degradation of PML. Acetylation at Lys-487 is essential for its nuclear localization. Deacetylated at Lys-487 by SIRT1 and this deacetylation promotes PML control of PER2 nuclear localization. In terms of processing, (Microbial infection) Immediate early protein IE1 of human cytomegalovirus (HHV-5) interferes with the sumoylation of PML. Immediate early protein IE1 inhibits PML de novo sumoylation. Post-translationally, (Microbial infection) Cleaved at two different sites by enterovirus 71 protease 3C, leading to impaired PML-Nuclear bodies formation.

Its subcellular location is the nucleus. It localises to the nucleoplasm. The protein localises to the cytoplasm. The protein resides in the PML body. It is found in the nucleolus. Its subcellular location is the endoplasmic reticulum membrane. It localises to the early endosome membrane. It functions in the pathway protein modification; protein sumoylation. Its function is as follows. Functions via its association with PML-nuclear bodies (PML-NBs) in a wide range of important cellular processes, including tumor suppression, transcriptional regulation, apoptosis, senescence, DNA damage response, and viral defense mechanisms. Acts as the scaffold of PML-NBs allowing other proteins to shuttle in and out, a process which is regulated by SUMO-mediated modifications and interactions. Inhibits EIF4E-mediated mRNA nuclear export by reducing EIF4E affinity for the 5' 7-methylguanosine (m7G) cap of target mRNAs. Isoform PML-4 has a multifaceted role in the regulation of apoptosis and growth suppression: activates RB1 and inhibits AKT1 via interactions with PP1 and PP2A phosphatases respectively, negatively affects the PI3K pathway by inhibiting MTOR and activating PTEN, and positively regulates p53/TP53 by acting at different levels (by promoting its acetylation and phosphorylation and by inhibiting its MDM2-dependent degradation). Isoform PML-4 also: acts as a transcriptional repressor of TBX2 during cellular senescence and the repression is dependent on a functional RBL2/E2F4 repressor complex, regulates double-strand break repair in gamma-irradiation-induced DNA damage responses via its interaction with WRN, acts as a negative regulator of telomerase by interacting with TERT, and regulates PER2 nuclear localization and circadian function. Isoform PML-6 inhibits specifically the activity of the tetrameric form of PKM. The nuclear isoforms (isoform PML-1, isoform PML-2, isoform PML-3, isoform PML-4 and isoform PML-5) in concert with SATB1 are involved in local chromatin-loop remodeling and gene expression regulation at the MHC-I locus. Isoform PML-2 is required for efficient IFN-gamma induced MHC II gene transcription via regulation of CIITA. Cytoplasmic PML is involved in the regulation of the TGF-beta signaling pathway. PML also regulates transcription activity of ELF4 and can act as an important mediator for TNF-alpha- and IFN-alpha-mediated inhibition of endothelial cell network formation and migration. Functionally, exhibits antiviral activity against both DNA and RNA viruses. The antiviral activity can involve one or several isoform(s) and can be enhanced by the permanent PML-NB-associated protein DAXX or by the recruitment of p53/TP53 within these structures. Isoform PML-4 restricts varicella zoster virus (VZV) via sequestration of virion capsids in PML-NBs thereby preventing their nuclear egress and inhibiting formation of infectious virus particles. The sumoylated isoform PML-4 restricts rabies virus by inhibiting viral mRNA and protein synthesis. The cytoplasmic isoform PML-14 can restrict herpes simplex virus-1 (HHV-1) replication by sequestering the viral E3 ubiquitin-protein ligase ICP0 in the cytoplasm. Isoform PML-6 shows restriction activity towards human cytomegalovirus (HHV-5) and influenza A virus strains PR8(H1N1) and ST364(H3N2). Sumoylated isoform PML-4 and isoform PML-12 show antiviral activity against encephalomyocarditis virus (EMCV) by promoting nuclear sequestration of viral polymerase (P3D-POL) within PML NBs. Isoform PML-3 exhibits antiviral activity against poliovirus by inducing apoptosis in infected cells through the recruitment and the activation of p53/TP53 in the PML-NBs. Isoform PML-3 represses human foamy virus (HFV) transcription by complexing the HFV transactivator, bel1/tas, preventing its binding to viral DNA. PML may positively regulate infectious hepatitis C viral (HCV) production and isoform PML-2 may enhance adenovirus transcription. Functions as an E3 SUMO-protein ligase that sumoylates (HHV-5) immediate early protein IE1, thereby participating in the antiviral response. Isoforms PML-3 and PML-6 display the highest levels of sumoylation activity. This is Protein PML (PML) from Homo sapiens (Human).